A 482-amino-acid polypeptide reads, in one-letter code: Glutamate--tRNA ligase (482 aa).

Residues 10 to 20 (PSPTGFLHIGN) carry the 'HIGH' region motif. A 'KMSKS' region motif is present at residues 253 to 257 (KLSKR). An ATP-binding site is contributed by lysine 256.

The protein belongs to the class-I aminoacyl-tRNA synthetase family. Glutamate--tRNA ligase type 1 subfamily. In terms of assembly, monomer.

It localises to the cytoplasm. It catalyses the reaction tRNA(Glu) + L-glutamate + ATP = L-glutamyl-tRNA(Glu) + AMP + diphosphate. Its function is as follows. Catalyzes the attachment of glutamate to tRNA(Glu) in a two-step reaction: glutamate is first activated by ATP to form Glu-AMP and then transferred to the acceptor end of tRNA(Glu). The protein is Glutamate--tRNA ligase of Mesoplasma florum (strain ATCC 33453 / NBRC 100688 / NCTC 11704 / L1) (Acholeplasma florum).